We begin with the raw amino-acid sequence, 190 residues long: Large ribosomal subunit protein bL9 (190 aa).

Belongs to the bacterial ribosomal protein bL9 family.

Binds to the 23S rRNA. In Methylobacterium radiotolerans (strain ATCC 27329 / DSM 1819 / JCM 2831 / NBRC 15690 / NCIMB 10815 / 0-1), this protein is Large ribosomal subunit protein bL9.